Reading from the N-terminus, the 185-residue chain is Ribosome-recycling factor (185 aa).

It belongs to the RRF family.

The protein resides in the cytoplasm. Its function is as follows. Responsible for the release of ribosomes from messenger RNA at the termination of protein biosynthesis. May increase the efficiency of translation by recycling ribosomes from one round of translation to another. This is Ribosome-recycling factor from Geobacillus sp. (strain WCH70).